We begin with the raw amino-acid sequence, 355 residues long: Heterogeneous nuclear ribonucleoprotein D0 (355 aa).

The disordered stretch occupies residues 1 to 91 (MSEEQFGGDG…SSPRHTEAAA (91 aa)). Ser2 is subject to N-acetylserine. The span at 11–43 (AAAAATAAVGGSAGEQEGAMVAAAAQGPAAAAG) shows a compositional bias: low complexity. Gly residues predominate over residues 44-58 (SGSGGGGSAAGGTEG). Positions 64-73 (EGAKIDASKN) are enriched in basic and acidic residues. Position 71 is a phosphoserine (Ser71). Lys72 participates in a covalent cross-link: Glycyl lysine isopeptide (Lys-Gly) (interchain with G-Cter in SUMO2). Phosphoserine occurs at positions 80, 82, and 83. 2 consecutive RRM domains span residues 97-179 (WKMF…KTKE) and 182-261 (KKIF…MSKE). Lys119 is subject to N6-methyllysine. A Phosphothreonine modification is found at Thr127. Residue Lys129 forms a Glycyl lysine isopeptide (Lys-Gly) (interchain with G-Cter in SUMO2) linkage. Lys165 carries the N6-acetyllysine modification. Ser190 carries the post-translational modification Phosphoserine. A Phosphothreonine modification is found at Thr193. Residue Lys197 forms a Glycyl lysine isopeptide (Lys-Gly) (interchain with G-Cter in SUMO2) linkage. N6-acetyllysine occurs at positions 243 and 251. An omega-N-methylarginine mark is found at Glu261 and Tyr263. Phosphoserine is present on Ser271. 4 positions are modified to omega-N-methylarginine: Arg272, Arg278, Arg280, and Arg282. Arg345 carries the asymmetric dimethylarginine; alternate modification. Residue Arg345 is modified to Dimethylated arginine; alternate. Arg345 carries the post-translational modification Omega-N-methylarginine; alternate.

As to quaternary structure, identified in a IGF2BP1-dependent mRNP granule complex containing untranslated mRNAs. Part of a complex associated with the FOS mCRD domain and consisting of PABPC1, PAIP1, CSDE1/UNR and SYNCRIP. Interacts with IGF2BP2. Interacts with GTPBP1. Interacts with EIF4G1; the interaction requires RNA. Interacts with EIF3B and RPS3. Methylated by PRMT1, in an insulin-dependent manner. The PRMT1-mediated methylation regulates its phosphorylation. Post-translationally, arg-345 is dimethylated, probably to asymmetric dimethylarginine.

Its subcellular location is the nucleus. It localises to the cytoplasm. In terms of biological role, binds with high affinity to RNA molecules that contain AU-rich elements (AREs) found within the 3'-UTR of many proto-oncogenes and cytokine mRNAs. Also binds to double- and single-stranded DNA sequences in a specific manner and functions a transcription factor. Each of the RNA-binding domains specifically can bind solely to a single-stranded non-monotonous 5'-UUAG-3' sequence and also weaker to the single-stranded 5'-TTAGGG-3' telomeric DNA repeat. Binds RNA oligonucleotides with 5'-UUAGGG-3' repeats more tightly than the telomeric single-stranded DNA 5'-TTAGGG-3' repeats. Binding of RRM1 to DNA inhibits the formation of DNA quadruplex structure which may play a role in telomere elongation. May be involved in translationally coupled mRNA turnover. Implicated with other RNA-binding proteins in the cytoplasmic deadenylation/translational and decay interplay of the FOS mRNA mediated by the major coding-region determinant of instability (mCRD) domain. May play a role in the regulation of the rhythmic expression of circadian clock core genes. Directly binds to the 3'UTR of CRY1 mRNA and induces CRY1 rhythmic translation. May also be involved in the regulation of PER2 translation. This chain is Heterogeneous nuclear ribonucleoprotein D0 (Hnrnpd), found in Mus musculus (Mouse).